The following is a 217-amino-acid chain: Ras-like protein (217 aa).

Residue 17–24 (GGGGVGKS) coordinates GTP. The Effector region motif lies at 39–47 (YDPTIEDSY). Residues 64–68 (DTAGQ) and 123–126 (NKCD) each bind GTP. The segment at 181–200 (TGRMMTGGGGGGPPGTYAGK) is disordered. The span at 185-194 (MTGGGGGGPP) shows a compositional bias: gly residues. Residues C210 and C211 are each lipidated (S-palmitoyl cysteine). Position 214 is a cysteine methyl ester (C214). A lipid anchor (S-geranylgeranyl cysteine) is attached at C214. The propeptide at 215–217 (VVL) is removed in mature form.

Belongs to the small GTPase superfamily. Ras family.

It localises to the cell membrane. The enzyme catalyses GTP + H2O = GDP + phosphate + H(+). Alternates between an inactive form bound to GDP and an active form bound to GTP. Activated by a guanine nucleotide-exchange factor (GEF) and inactivated by a GTPase-activating protein (GAP). The sequence is that of Ras-like protein from Lentinula edodes (Shiitake mushroom).